Consider the following 241-residue polypeptide: Methylthioribulose-1-phosphate dehydratase (241 aa).

Positions 1-11 are enriched in polar residues; sequence MSSLCDTSNGE. The tract at residues 1–20 is disordered; the sequence is MSSLCDTSNGESHADPCQDK. Cysteine 96 is a binding site for substrate. Residues histidine 114 and histidine 116 each contribute to the Zn(2+) site. Glutamate 138 (proton donor/acceptor) is an active-site residue. Histidine 194 is a binding site for Zn(2+).

This sequence belongs to the aldolase class II family. MtnB subfamily. Zn(2+) is required as a cofactor.

It is found in the cytoplasm. It catalyses the reaction 5-(methylsulfanyl)-D-ribulose 1-phosphate = 5-methylsulfanyl-2,3-dioxopentyl phosphate + H2O. Its pathway is amino-acid biosynthesis; L-methionine biosynthesis via salvage pathway; L-methionine from S-methyl-5-thio-alpha-D-ribose 1-phosphate: step 2/6. Catalyzes the dehydration of methylthioribulose-1-phosphate (MTRu-1-P) into 2,3-diketo-5-methylthiopentyl-1-phosphate (DK-MTP-1-P). Functions in the methionine salvage pathway. May play a role in apoptosis. This is Methylthioribulose-1-phosphate dehydratase from Osmerus mordax (Rainbow smelt).